The sequence spans 257 residues: Ribonuclease HII (257 aa).

The RNase H type-2 domain occupies 72–257; sequence TYIAGIDEVG…FAPIKDMIQK (186 aa). A divalent metal cation-binding residues include Asp78, Glu79, and Asp170.

This sequence belongs to the RNase HII family. Mn(2+) serves as cofactor. It depends on Mg(2+) as a cofactor.

It localises to the cytoplasm. The enzyme catalyses Endonucleolytic cleavage to 5'-phosphomonoester.. Its function is as follows. Endonuclease that specifically degrades the RNA of RNA-DNA hybrids. In Bacillus cereus (strain G9842), this protein is Ribonuclease HII.